Reading from the N-terminus, the 242-residue chain is tRNA pseudouridine synthase A (242 aa).

The active-site Nucleophile is the aspartate 51. A substrate-binding site is contributed by tyrosine 107.

Belongs to the tRNA pseudouridine synthase TruA family. In terms of assembly, homodimer.

It carries out the reaction uridine(38/39/40) in tRNA = pseudouridine(38/39/40) in tRNA. Functionally, formation of pseudouridine at positions 38, 39 and 40 in the anticodon stem and loop of transfer RNAs. This chain is tRNA pseudouridine synthase A, found in Helicobacter acinonychis (strain Sheeba).